The chain runs to 183 residues: Dual-action ribosomal maturation protein DarP (183 aa).

It belongs to the DarP family.

The protein resides in the cytoplasm. Functionally, member of a network of 50S ribosomal subunit biogenesis factors which assembles along the 30S-50S interface, preventing incorrect 23S rRNA structures from forming. Promotes peptidyl transferase center (PTC) maturation. The polypeptide is Dual-action ribosomal maturation protein DarP (Salmonella gallinarum (strain 287/91 / NCTC 13346)).